A 248-amino-acid polypeptide reads, in one-letter code: Triosephosphate isomerase (248 aa).

9 to 11 (NWK) is a substrate binding site. His-94 (electrophile) is an active-site residue. Glu-166 functions as the Proton acceptor in the catalytic mechanism. Substrate-binding positions include Gly-172, Ser-212, and 233–234 (GG).

It belongs to the triosephosphate isomerase family. In terms of assembly, homodimer.

The protein resides in the cytoplasm. The enzyme catalyses D-glyceraldehyde 3-phosphate = dihydroxyacetone phosphate. The protein operates within carbohydrate biosynthesis; gluconeogenesis. It participates in carbohydrate degradation; glycolysis; D-glyceraldehyde 3-phosphate from glycerone phosphate: step 1/1. Functionally, involved in the gluconeogenesis. Catalyzes stereospecifically the conversion of dihydroxyacetone phosphate (DHAP) to D-glyceraldehyde-3-phosphate (G3P). The chain is Triosephosphate isomerase from Clostridium botulinum (strain Langeland / NCTC 10281 / Type F).